A 312-amino-acid chain; its full sequence is Pyridoxal 5'-phosphate synthase subunit PDX1 (312 aa).

Position 43 (Asp43) interacts with D-ribose 5-phosphate. Lys100 serves as the catalytic Schiff-base intermediate with D-ribose 5-phosphate. Gly172 is a D-ribose 5-phosphate binding site. Arg184 is a binding site for D-glyceraldehyde 3-phosphate. D-ribose 5-phosphate-binding positions include Gly233 and Gly254–Ser255.

The protein belongs to the PdxS/SNZ family.

The enzyme catalyses aldehydo-D-ribose 5-phosphate + D-glyceraldehyde 3-phosphate + L-glutamine = pyridoxal 5'-phosphate + L-glutamate + phosphate + 3 H2O + H(+). It functions in the pathway cofactor biosynthesis; pyridoxal 5'-phosphate biosynthesis. Functionally, catalyzes the formation of pyridoxal 5'-phosphate from ribose 5-phosphate (RBP), glyceraldehyde 3-phosphate (G3P) and ammonia. The ammonia is provided by PDX2. Can also use ribulose 5-phosphate and dihydroxyacetone phosphate as substrates, resulting from enzyme-catalyzed isomerization of RBP and G3P, respectively. Also plays an indirect role in resistance to singlet oxygen-generating photosensitizers. This chain is Pyridoxal 5'-phosphate synthase subunit PDX1 (PDX1), found in Phaseolus vulgaris (Kidney bean).